Reading from the N-terminus, the 425-residue chain is Glutamyl-tRNA reductase (425 aa).

Substrate is bound by residues 47 to 50 (TCNR), S107, 112 to 114 (EDQ), and Q118. The active-site Nucleophile is C48. 187–192 (GAGHIA) contacts NADP(+).

The protein belongs to the glutamyl-tRNA reductase family. As to quaternary structure, homodimer.

The catalysed reaction is (S)-4-amino-5-oxopentanoate + tRNA(Glu) + NADP(+) = L-glutamyl-tRNA(Glu) + NADPH + H(+). Its pathway is porphyrin-containing compound metabolism; protoporphyrin-IX biosynthesis; 5-aminolevulinate from L-glutamyl-tRNA(Glu): step 1/2. It functions in the pathway porphyrin-containing compound metabolism; chlorophyll biosynthesis. In terms of biological role, catalyzes the NADPH-dependent reduction of glutamyl-tRNA(Glu) to glutamate 1-semialdehyde (GSA). This Roseiflexus sp. (strain RS-1) protein is Glutamyl-tRNA reductase.